The sequence spans 363 residues: MSIESFANQHVLELVAYQPGKPIEETARELGLNPHDIVKLASNENPLGPSPKAVEAIARAAAGVNIYPDGAAFRLRSAIAEFCGVEFGQTVVGTGSSEVIELICHALLNPRAEVVAAKHAFSMYPIMSKLFGAAYVEVPNKEDWTHDLDGFLAAITENTRVVFITNPTNPVGTVVGQQEIDDFMAKVPEHVLVVFDEAYREFSDNPPDTLKFVREGRNVVVLRTFSKAYGLAGLRVGYGIAPEPVCSMLHKARAPFNLHVLAQEAALAALEDREHVRRTVENNKEGMRFYEQAFREMGLEWIPSQGNFILVKVGRGKQVFQDMLARGVIVRAQDGYGLPEWIRISIGTPAENARCIEVLKEVL.

The residue at position 227 (K227) is an N6-(pyridoxal phosphate)lysine.

It belongs to the class-II pyridoxal-phosphate-dependent aminotransferase family. Histidinol-phosphate aminotransferase subfamily. As to quaternary structure, homodimer. The cofactor is pyridoxal 5'-phosphate.

It carries out the reaction L-histidinol phosphate + 2-oxoglutarate = 3-(imidazol-4-yl)-2-oxopropyl phosphate + L-glutamate. It participates in amino-acid biosynthesis; L-histidine biosynthesis; L-histidine from 5-phospho-alpha-D-ribose 1-diphosphate: step 7/9. This is Histidinol-phosphate aminotransferase from Akkermansia muciniphila (strain ATCC BAA-835 / DSM 22959 / JCM 33894 / BCRC 81048 / CCUG 64013 / CIP 107961 / Muc).